The sequence spans 380 residues: Chaperone protein DnaJ (380 aa).

Positions 4–68 constitute a J domain; it reads DFYSVLGVSR…EKRRMYDQMG (65 aa). Basic and acidic residues predominate over residues 27–87; it reads KASEYHPDVS…RGATDTDRGR (61 aa). The tract at residues 27-126 is disordered; that stretch reads KASEYHPDVS…SRSGPRQGSD (100 aa). Residues 88–100 show a composition bias toward gly residues; the sequence is GGMGGMGGGGMGG. Low complexity predominate over residues 115–124; sequence SQSRSGPRQG. The segment at 141–223 adopts a CR-type zinc-finger fold; sequence GVTKQLTVTR…CRGDGQVRNE (83 aa). Residues C154, C157, C171, C174, C197, C200, C211, and C214 each coordinate Zn(2+). CXXCXGXG motif repeat units follow at residues 154–161, 171–178, 197–204, and 211–218; these read CPDCDGAG, CSACDGRG, CPQCDGKG, and CSTCRGDG.

It belongs to the DnaJ family. As to quaternary structure, homodimer. Zn(2+) is required as a cofactor.

Its subcellular location is the cytoplasm. Its function is as follows. Participates actively in the response to hyperosmotic and heat shock by preventing the aggregation of stress-denatured proteins and by disaggregating proteins, also in an autonomous, DnaK-independent fashion. Unfolded proteins bind initially to DnaJ; upon interaction with the DnaJ-bound protein, DnaK hydrolyzes its bound ATP, resulting in the formation of a stable complex. GrpE releases ADP from DnaK; ATP binding to DnaK triggers the release of the substrate protein, thus completing the reaction cycle. Several rounds of ATP-dependent interactions between DnaJ, DnaK and GrpE are required for fully efficient folding. Also involved, together with DnaK and GrpE, in the DNA replication of plasmids through activation of initiation proteins. The chain is Chaperone protein DnaJ from Natronomonas pharaonis (strain ATCC 35678 / DSM 2160 / CIP 103997 / JCM 8858 / NBRC 14720 / NCIMB 2260 / Gabara) (Halobacterium pharaonis).